A 368-amino-acid polypeptide reads, in one-letter code: S-adenosylmethionine decarboxylase proenzyme 1 (368 aa).

Catalysis depends on residues E9 and R12. The active-site Schiff-base intermediate with substrate; via pyruvic acid is the S69. Residue S69 is modified to Pyruvic acid (Ser); by autocatalysis. The Proton donor; for catalytic activity role is filled by C83. Residues S234 and H247 each act as proton acceptor; for processing activity in the active site.

Belongs to the eukaryotic AdoMetDC family. It depends on pyruvate as a cofactor. Is synthesized initially as an inactive proenzyme. Formation of the active enzyme involves a self-maturation process in which the active site pyruvoyl group is generated from an internal serine residue via an autocatalytic post-translational modification. Two non-identical subunits are generated from the proenzyme in this reaction, and the pyruvate is formed at the N-terminus of the alpha chain, which is derived from the carboxyl end of the proenzyme. The post-translation cleavage follows an unusual pathway, termed non-hydrolytic serinolysis, in which the side chain hydroxyl group of the serine supplies its oxygen atom to form the C-terminus of the beta chain, while the remainder of the serine residue undergoes an oxidative deamination to produce ammonia and the pyruvoyl group blocking the N-terminus of the alpha chain.

The enzyme catalyses S-adenosyl-L-methionine + H(+) = S-adenosyl 3-(methylsulfanyl)propylamine + CO2. It participates in amine and polyamine biosynthesis; S-adenosylmethioninamine biosynthesis; S-adenosylmethioninamine from S-adenosyl-L-methionine: step 1/1. This is S-adenosylmethionine decarboxylase proenzyme 1 (SAMDC1) from Brassica juncea (Indian mustard).